The chain runs to 831 residues: DNA ligase (831 aa).

NAD(+) contacts are provided by residues 34–38 (DADYD), 83–84 (SL), and E114. K116 functions as the N6-AMP-lysine intermediate in the catalytic mechanism. NAD(+) contacts are provided by R137, E174, K291, and K315. C409, C412, C427, and C433 together coordinate Zn(2+). One can recognise a BRCT domain in the interval 749-831 (AHTAPLNGQS…LDFLEQYSAQ (83 aa)).

It belongs to the NAD-dependent DNA ligase family. LigA subfamily. Mg(2+) serves as cofactor. Requires Mn(2+) as cofactor.

The catalysed reaction is NAD(+) + (deoxyribonucleotide)n-3'-hydroxyl + 5'-phospho-(deoxyribonucleotide)m = (deoxyribonucleotide)n+m + AMP + beta-nicotinamide D-nucleotide.. DNA ligase that catalyzes the formation of phosphodiester linkages between 5'-phosphoryl and 3'-hydroxyl groups in double-stranded DNA using NAD as a coenzyme and as the energy source for the reaction. It is essential for DNA replication and repair of damaged DNA. The polypeptide is DNA ligase (Xylella fastidiosa (strain M12)).